Consider the following 317-residue polypeptide: Small ribosomal subunit protein uS2 (317 aa).

The disordered stretch occupies residues 277–317; it reads SDWTAPAANPANAAAAGAPAPAPAAATTTESWGGSGAENWG. Over residues 281–302 the composition is skewed to low complexity; it reads APAANPANAAAAGAPAPAPAAA.

This sequence belongs to the universal ribosomal protein uS2 family. Component of the small ribosomal subunit. Mature ribosomes consist of a small (40S) and a large (60S) subunit. The 40S subunit contains about 33 different proteins and 1 molecule of RNA (18S). The 60S subunit contains about 49 different proteins and 3 molecules of RNA (28S, 5.8S and 5S). Interacts with ribosomal protein S21.

Its subcellular location is the cytoplasm. In terms of biological role, required for the assembly and/or stability of the 40S ribosomal subunit. Required for the processing of the 20S rRNA-precursor to mature 18S rRNA in a late step of the maturation of 40S ribosomal subunits. The polypeptide is Small ribosomal subunit protein uS2 (Urechis caupo (Innkeeper worm)).